The sequence spans 555 residues: T-complex protein 1 subunit gamma (555 aa).

The tract at residues 527-555 (KKKQAPGSGPSKPTIETEGDADNEQILPD) is disordered.

It belongs to the TCP-1 chaperonin family. In terms of assembly, heterooligomeric complex of about 850 to 900 kDa that forms two stacked rings, 12 to 16 nm in diameter. Interacts with CCT8.

It is found in the cytoplasm. Functionally, molecular chaperone; assists the folding of proteins upon ATP hydrolysis. Known to play a role, in vitro, in the folding of actin and tubulin. In Arabidopsis thaliana (Mouse-ear cress), this protein is T-complex protein 1 subunit gamma.